The primary structure comprises 491 residues: MKQYRNFVDGKWVESSKTFQDVTPIDGSVVAVVHEADRDLVDAAVKAGHRALEGEWGRTTAAQRVDWLRRIANEMERRQQDFLDAEMADTGKPLSMAATIDIPRGIANFRNFADILATAPVDSHRLDLPDGAYALNYAARKPLGVVGVISPWNLPLLLLTWKVAPALACGNAVVVKPSEDTPGTATLLAEVMEAVGIPPGVFNLVHGFGPNSAGEFISQHPDISAITFTGESKTGSTIMRAAAEGVKPVSFELGGKNAAVIFADCDFEKMLDGMMRALFLNSGQVCLCSERVYVERPIFDRFCVALAERIKALKVDWPHETDTQMGPLISSKHRDKVLSYFELARQEGATFLAGGGVPRFGDERDNGAWVEPTVIAGLSDDARVVREEIFGPICHVTPFDSESEVIRRANDTRYGLAATIWTTNLSRAHRVSELMRVGISWVNTWFLRDLRTPFGGAGLSGIGREGGMHSLNFYSELTNVCVRIDKESPDV.

Residues E252 and C286 contribute to the active site.

This sequence belongs to the aldehyde dehydrogenase family. In terms of assembly, homotrimer.

The catalysed reaction is 2-aminomuconate 6-semialdehyde + NAD(+) + H2O = (2Z,4E)-2-aminomuconate + NADH + 2 H(+). Strongly inhibited by Ag(+) and Hg(+), and comnpletely inhibited by p-chloromercuribenzoic acid. In terms of biological role, involved in the modified meta-cleavage pathway for 2-aminophenol catabolism. The enzyme is also active toward 2-hydroxymuconic 6-semialdehyde, acetaldehyde, propionaldehyde, and butyraldehyde. The protein is 2-aminomuconic 6-semialdehyde dehydrogenase (amnC) of Pseudomonas sp.